A 153-amino-acid chain; its full sequence is ORM1-like protein 1 (153 aa).

The Cytoplasmic segment spans residues 1-26 (MNVGVAHSEVNPNTRVMNSRGMWLTY). A run of 2 helical transmembrane segments spans residues 27-46 (ALGV…FSVP) and 47-64 (VAWT…YVFL). The Cytoplasmic portion of the chain corresponds to 65–100 (HAVKGTPFETPDQGKARLLTHWEQLDYGVQFTSSRK). Residues 101–121 (FFTISPIILYFLASFYTKYDP) traverse the membrane as a helical segment. At 122 to 123 (TH) the chain is on the extracellular side. The helical transmembrane segment at 124 to 140 (FILNTASLLSVLIPKMP) threads the bilayer. Residues 141 to 153 (QLHGVRIFGINKY) are Cytoplasmic-facing.

It belongs to the ORM family. As to quaternary structure, ceramide-sensitive subunit of the serine palmitoyltransferase (SPT) complex, which is also composed of SPTLC1, SPTLC2/3 and SPTSSA/B. In terms of tissue distribution, widely expressed. Expressed in adult and fetal heart, brain, lung, liver, skeletal muscle and kidney. Expressed in adult pancreas and placenta and in fetal spleen abd thymus. Expressed at intermediate level in pancreas, placenta and brain but low in skeletal muscle and lung.

It is found in the endoplasmic reticulum membrane. Its function is as follows. Plays an essential role in the homeostatic regulation of sphingolipid de novo biosynthesis by modulating the activity of the serine palmitoyltransferase (SPT) in response to ceramide levels. When complexed to SPT, the binding of ceramides to its N-terminus stabilizes a conformation that block SPT substrate entry, hence preventing SPT catalytic activity. Through this mechanism, maintains ceramide levels at sufficient concentrations for the production of complex sphingolipids, but which prevents the accumulation of ceramides to levels that trigger apoptosis. This chain is ORM1-like protein 1 (ORMDL1), found in Homo sapiens (Human).